Consider the following 162-residue polypeptide: 2-C-methyl-D-erythritol 2,4-cyclodiphosphate synthase (162 aa).

The a divalent metal cation site is built by D12 and H14. 4-CDP-2-C-methyl-D-erythritol 2-phosphate-binding positions include 12–14 (DVH) and 38–39 (HS). Residue H46 coordinates a divalent metal cation. 4-CDP-2-C-methyl-D-erythritol 2-phosphate is bound by residues 60-62 (DIG), 65-69 (FPDTD), F143, and R146.

The protein belongs to the IspF family. Homotrimer. The cofactor is a divalent metal cation.

It catalyses the reaction 4-CDP-2-C-methyl-D-erythritol 2-phosphate = 2-C-methyl-D-erythritol 2,4-cyclic diphosphate + CMP. It functions in the pathway isoprenoid biosynthesis; isopentenyl diphosphate biosynthesis via DXP pathway; isopentenyl diphosphate from 1-deoxy-D-xylulose 5-phosphate: step 4/6. In terms of biological role, involved in the biosynthesis of isopentenyl diphosphate (IPP) and dimethylallyl diphosphate (DMAPP), two major building blocks of isoprenoid compounds. Catalyzes the conversion of 4-diphosphocytidyl-2-C-methyl-D-erythritol 2-phosphate (CDP-ME2P) to 2-C-methyl-D-erythritol 2,4-cyclodiphosphate (ME-CPP) with a corresponding release of cytidine 5-monophosphate (CMP). The chain is 2-C-methyl-D-erythritol 2,4-cyclodiphosphate synthase from Azoarcus sp. (strain BH72).